The chain runs to 130 residues: Galectin-2 (130 aa).

A Galectin domain is found at 4-130 (KFEVKDLNMK…GLQISSFKLE (127 aa)). 65–71 (WGQEQRE) is a binding site for a beta-D-galactoside.

As to quaternary structure, homodimer.

Functionally, this protein binds beta-galactoside. Its physiological function is not yet known. This chain is Galectin-2 (Lgals2), found in Mus musculus (Mouse).